Here is an 89-residue protein sequence, read N- to C-terminus: Small ribosomal subunit protein uS15 (89 aa).

Belongs to the universal ribosomal protein uS15 family. Part of the 30S ribosomal subunit. Forms a bridge to the 50S subunit in the 70S ribosome, contacting the 23S rRNA.

Functionally, one of the primary rRNA binding proteins, it binds directly to 16S rRNA where it helps nucleate assembly of the platform of the 30S subunit by binding and bridging several RNA helices of the 16S rRNA. Its function is as follows. Forms an intersubunit bridge (bridge B4) with the 23S rRNA of the 50S subunit in the ribosome. This Chlorobium phaeovibrioides (strain DSM 265 / 1930) (Prosthecochloris vibrioformis (strain DSM 265)) protein is Small ribosomal subunit protein uS15.